We begin with the raw amino-acid sequence, 196 residues long: Large ribosomal subunit protein uL18 (196 aa).

This sequence belongs to the universal ribosomal protein uL18 family. In terms of assembly, part of the 50S ribosomal subunit. Contacts the 5S and 23S rRNAs.

This is one of the proteins that bind and probably mediate the attachment of the 5S RNA into the large ribosomal subunit, where it forms part of the central protuberance. This is Large ribosomal subunit protein uL18 from Saccharolobus islandicus (strain L.S.2.15 / Lassen #1) (Sulfolobus islandicus).